The primary structure comprises 408 residues: CinA-like protein (408 aa).

Belongs to the CinA family.

In Thermotoga sp. (strain RQ2), this protein is CinA-like protein.